The following is a 265-amino-acid chain: MQRYAVGIEFSGIQYRGWQTQQPGVASVQETIERVLSKIADEPITLHGAGRTDAGVHATNMVAHFDTNAIRPERGWIMGANSQLPKDISIQWIKQMDEEFHARFKATARRYRYVVYNAPHRPALLHKQVTHIYQKLDVQKMIKAASKFEGTHNFETFRAAACQSNQPVRHVKHCRLFEHGRYLVLDIQADGFLHHMVRNIMGCLLEIGQGMYEIDHIDAMFAAEDRKAAGITAPPDGLYFIQCYYPEQFDLPHPPLGPHWLNLPE.

Aspartate 53 serves as the catalytic Nucleophile. Substrate is bound at residue tyrosine 111.

The protein belongs to the tRNA pseudouridine synthase TruA family. Homodimer.

The catalysed reaction is uridine(38/39/40) in tRNA = pseudouridine(38/39/40) in tRNA. Functionally, formation of pseudouridine at positions 38, 39 and 40 in the anticodon stem and loop of transfer RNAs. In Acinetobacter baumannii (strain ATCC 17978 / DSM 105126 / CIP 53.77 / LMG 1025 / NCDC KC755 / 5377), this protein is tRNA pseudouridine synthase A.